Here is a 178-residue protein sequence, read N- to C-terminus: Large ribosomal subunit protein bL25 (178 aa).

It belongs to the bacterial ribosomal protein bL25 family. CTC subfamily. As to quaternary structure, part of the 50S ribosomal subunit; part of the 5S rRNA/L5/L18/L25 subcomplex. Contacts the 5S rRNA. Binds to the 5S rRNA independently of L5 and L18.

This is one of the proteins that binds to the 5S RNA in the ribosome where it forms part of the central protuberance. This Helicobacter acinonychis (strain Sheeba) protein is Large ribosomal subunit protein bL25.